Here is a 510-residue protein sequence, read N- to C-terminus: Inositol-3-phosphate synthase 1 (510 aa).

24 residues coordinate NAD(+): Gly-70, Gly-71, Asn-72, Asn-73, Asp-143, Ile-180, Gln-190, Arg-193, Thr-230, Ala-231, Asn-232, Thr-233, Gly-281, Ser-282, Asp-306, Ser-309, Asn-340, Asn-341, Asp-342, Lys-355, Gly-393, Asp-394, Asp-422, and Ser-423.

Belongs to the myo-inositol 1-phosphate synthase family. NAD(+) serves as cofactor.

The protein resides in the cytoplasm. Its subcellular location is the cytosol. It is found in the nucleus. The catalysed reaction is D-glucose 6-phosphate = 1D-myo-inositol 3-phosphate. The protein operates within polyol metabolism; myo-inositol biosynthesis; myo-inositol from D-glucose 6-phosphate: step 1/2. Key enzyme in myo-inositol biosynthesis pathway that catalyzes the conversion of glucose 6-phosphate to 1-myo-inositol 1-phosphate in a NAD-dependent manner. May play a role in oxidative stress resistance and influences ascorbate levels. The protein is Inositol-3-phosphate synthase 1 of Populus euphratica (Euphrates poplar).